Here is a 154-residue protein sequence, read N- to C-terminus: Prefoldin subunit 2 (154 aa).

Disordered stretches follow at residues Met-1 to Ala-20 and Leu-126 to Ser-154. Positions Gly-9 to Lys-18 are enriched in gly residues. Basic and acidic residues predominate over residues Leu-126–Ser-139. Over residues Glu-140–Ser-154 the composition is skewed to low complexity.

This sequence belongs to the prefoldin subunit beta family. As to quaternary structure, heterohexamer of two PFD-alpha type and four PFD-beta type subunits. Component of the PAQosome complex which is responsible for the biogenesis of several protein complexes and which consists of R2TP complex members RUVBL1, RUVBL2, RPAP3 and PIH1D1, URI complex members PFDN2, PFDN6, PDRG1, UXT and URI1 as well as ASDURF, POLR2E and DNAAF10/WDR92. Interacts with URI1; the interaction is phosphorylation-dependent and occurs in a growth-dependent manner.

It is found in the nucleus. The protein localises to the cytoplasm. The protein resides in the mitochondrion. Functionally, binds specifically to cytosolic chaperonin (c-CPN) and transfers target proteins to it. Binds to nascent polypeptide chain and promotes folding in an environment in which there are many competing pathways for nonnative proteins. In Mus musculus (Mouse), this protein is Prefoldin subunit 2 (Pfdn2).